Consider the following 128-residue polypeptide: Aspartate 1-decarboxylase (128 aa).

Serine 25 (schiff-base intermediate with substrate; via pyruvic acid) is an active-site residue. Serine 25 carries the post-translational modification Pyruvic acid (Ser). Threonine 57 is a binding site for substrate. Residue tyrosine 58 is the Proton donor of the active site. 73 to 75 (GAA) contacts substrate.

Belongs to the PanD family. In terms of assembly, heterooctamer of four alpha and four beta subunits. Pyruvate serves as cofactor. In terms of processing, is synthesized initially as an inactive proenzyme, which is activated by self-cleavage at a specific serine bond to produce a beta-subunit with a hydroxyl group at its C-terminus and an alpha-subunit with a pyruvoyl group at its N-terminus.

It is found in the cytoplasm. The enzyme catalyses L-aspartate + H(+) = beta-alanine + CO2. It functions in the pathway cofactor biosynthesis; (R)-pantothenate biosynthesis; beta-alanine from L-aspartate: step 1/1. Its function is as follows. Catalyzes the pyruvoyl-dependent decarboxylation of aspartate to produce beta-alanine. The polypeptide is Aspartate 1-decarboxylase (Chlorobium limicola (strain DSM 245 / NBRC 103803 / 6330)).